A 397-amino-acid polypeptide reads, in one-letter code: MALTPTREDKFSFGLWTIGYTGADPFGGPTRSDLDVVEGVERISELGAYGLTFHDDDLFAFGSTDAERQTQIDRLKGALSDTGIVVPMVTTNLFSAPVFKDGGFTSNDRAVRRFAIRKVLRNIDLAAELGAQTFVMWGGREGAEYDSAKDVRGALERYREAVNLLGDYVTDKGYDIRFAIEPKPNEPRGDILLPTLGHALAFIETLERPELVGVNPEVGHEQMAGLNFTAGIMQALYQGKLFHIDLNGQRGIKYDQDLVFGHGDLQNAFSLVDLLENGGVGGGRSYDGPRHFDYKPSRTEDITGVWDSAAANMRMYLLLKERAQAFRADPEVQEALAAAKVQEIYTPTLNEGESYDDILADRSSYEDFDAPSYFDAKGFGFVRLNQLALEHLMGARS.

Active-site residues include histidine 54 and aspartate 57. The Mg(2+) site is built by glutamate 181, glutamate 217, histidine 220, aspartate 245, aspartate 255, aspartate 257, and aspartate 293.

This sequence belongs to the xylose isomerase family. As to quaternary structure, homotetramer. The cofactor is Mg(2+).

It is found in the cytoplasm. The enzyme catalyses alpha-D-xylose = alpha-D-xylulofuranose. The polypeptide is Xylose isomerase (Clavibacter michiganensis subsp. michiganensis (strain NCPPB 382)).